Here is a 565-residue protein sequence, read N- to C-terminus: NAD-dependent malic enzyme (565 aa).

The active-site Proton donor is the Y104. R157 is a binding site for NAD(+). K175 serves as the catalytic Proton acceptor. E246, D247, and D270 together coordinate a divalent metal cation. Residues D270 and N418 each contribute to the NAD(+) site.

It belongs to the malic enzymes family. In terms of assembly, homotetramer. Mg(2+) is required as a cofactor. The cofactor is Mn(2+).

The catalysed reaction is (S)-malate + NAD(+) = pyruvate + CO2 + NADH. The enzyme catalyses oxaloacetate + H(+) = pyruvate + CO2. This chain is NAD-dependent malic enzyme, found in Escherichia coli (strain K12 / MC4100 / BW2952).